Here is a 117-residue protein sequence, read N- to C-terminus: Toxin CSTX-12 (117 aa).

The N-terminal stretch at 1–20 (MKVLVICAVLFLTIFSNSSA) is a signal peptide. The propeptide occupies 21–47 (ETEDDFLEDESFEADDVIPFLAREQVR). Cystine bridges form between Cys50-Cys65, Cys57-Cys74, Cys64-Cys95, and Cys76-Cys93. Residues 82–87 (RSDTAR) constitute a propeptide that is removed on maturation. Ala116 is subject to Alanine amide.

It belongs to the neurotoxin 19 (CSTX) family. 12 subfamily. Heterodimer of A and B chains; disulfide-linked. Interacts with CSTX-1 (AC P81694), and with CSTX-9 (AC P58604). Expressed by the venom gland.

The protein localises to the secreted. It is found in the target cell membrane. In terms of biological role, synergistic toxin that induces or increases a cytolytic effect when combined with CSTX-1 (AC P81694) or CSTX-9 (AC P58604). When alone, has a weak insecticidal activity, with an unknown molecular target. The polypeptide is Toxin CSTX-12 (Cupiennius salei (American wandering spider)).